The sequence spans 87 residues: Large ribosomal subunit protein bL31B (87 aa).

This sequence belongs to the bacterial ribosomal protein bL31 family. Type B subfamily. Part of the 50S ribosomal subunit.

This Escherichia coli O9:H4 (strain HS) protein is Large ribosomal subunit protein bL31B.